The sequence spans 205 residues: Urease accessory protein UreG (205 aa).

A GTP-binding site is contributed by 14 to 21 (GPVGSGKT).

This sequence belongs to the SIMIBI class G3E GTPase family. UreG subfamily. In terms of assembly, homodimer. UreD, UreF and UreG form a complex that acts as a GTP-hydrolysis-dependent molecular chaperone, activating the urease apoprotein by helping to assemble the nickel containing metallocenter of UreC. The UreE protein probably delivers the nickel.

It localises to the cytoplasm. Its function is as follows. Facilitates the functional incorporation of the urease nickel metallocenter. This process requires GTP hydrolysis, probably effectuated by UreG. The sequence is that of Urease accessory protein UreG from Enterobacter sp. (strain 638).